A 1854-amino-acid polypeptide reads, in one-letter code: Calcium-channel protein cch1 (1854 aa).

Over residues 1-15 the composition is skewed to low complexity; it reads MSSSSNSDPSSSPDN. The tract at residues 1 to 33 is disordered; sequence MSSSSNSDPSSSPDNTDFIPLKDNPKDTSSYIN. An N-linked (GlcNAc...) asparagine glycan is attached at N40. Helical transmembrane passes span 184 to 204, 220 to 240, and 274 to 294; these read HPLY…LLMI, IIVI…LFGF, and DFVA…QGIF. An N-linked (GlcNAc...) asparagine glycan is attached at N310. Helical transmembrane passes span 328–348, 427–447, 461–481, 514–534, 549–569, 581–601, 606–626, and 642–662; these read PLVQ…ILGV, FFNS…TDIM, LFII…IAVV, YLFY…VTLC, LIFY…RFFA, YTNL…LPSI, VAFG…ILLI, and QLLN…LCAV. The N-linked (GlcNAc...) asparagine glycan is linked to N699. A helical membrane pass occupies residues 723–743; sequence FFTLWFLFSNNVVLSMFIAVI. An N-linked (GlcNAc...) asparagine glycan is attached at N786. The next 3 membrane-spanning stretches (helical) occupy residues 946–966, 980–1000, and 1021–1041; these read VFIY…TPIY, FVWT…IKII, and FFVL…HALL. N1058 carries an N-linked (GlcNAc...) asparagine glycan. Transmembrane regions (helical) follow at residues 1075–1095 and 1148–1168; these read FFKI…FALW and FPHA…VDIM. N1184 carries an N-linked (GlcNAc...) asparagine glycan. 4 helical membrane-spanning segments follow: residues 1193-1213, 1274-1294, 1302-1322, and 1331-1351; these read FVLF…AIII, FTGL…PCPI, SIFL…VYGL, and FWNM…IAIL. The N-linked (GlcNAc...) asparagine glycan is linked to N1356. A run of 3 helical transmembrane segments spans residues 1358–1378, 1393–1413, and 1486–1506; these read SLTL…IPKF, PSIF…AIAF, and FIAW…TVVF. N-linked (GlcNAc...) asparagine glycosylation is found at N1508 and N1773. The interval 1764-1792 is disordered; that stretch reads TIASGEGDDNHSVEDHLKVPTDNEPRRSP. Over residues 1771–1790 the composition is skewed to basic and acidic residues; sequence DDNHSVEDHLKVPTDNEPRR.

This sequence belongs to the calcium channel alpha-1 subunit (TC 1.A.1.11) family. In terms of assembly, interacts with yam8 to form a Ca(2+) influx channel.

It is found in the cell membrane. Voltage-gated, high-affinity calcium channel that functions together with yam8 to mediate calcium entry into cells. Required during conditions of environmental stress. This chain is Calcium-channel protein cch1 (cch1), found in Schizosaccharomyces pombe (strain 972 / ATCC 24843) (Fission yeast).